Here is a 297-residue protein sequence, read N- to C-terminus: PsbP domain-containing protein 5, chloroplastic (297 aa).

It belongs to the PsbP family.

The protein resides in the plastid. The protein localises to the chloroplast thylakoid lumen. In terms of biological role, involved in strigolactone biosynthesis. In Arabidopsis thaliana (Mouse-ear cress), this protein is PsbP domain-containing protein 5, chloroplastic (PPD5).